The chain runs to 335 residues: NmrA-like family domain-containing oxidoreductase hkm9 (335 aa).

NADP(+)-binding positions include 12 to 17 (GATGNQ), 38 to 42 (RNPNS), 59 to 60 (DG), 80 to 82 (INS), lysine 137, and 161 to 164 (YLEN).

It belongs to the NmrA-type oxidoreductase family.

The protein operates within secondary metabolite biosynthesis. Functionally, nmrA-like family domain-containing oxidoreductase; part of the gene cluster that mediates the biosynthesis of hancockiamides, an unusual new family of N-cinnamoylated piperazines. The NRPS hkm10 and the NmrA-like reductase hkm9 are proposed to convert two molecules of L-Phe to the intermediary piperazine called xenocockiamide A. Xenocockiamide A is then converted to hancockiamide D via a series of hydroxylations and O-methylations. The tyrosinase hkm6 may catalyze an aromatic hydroxylation, then the 2-oxoglutarate-dependent Fe(II) dioxygenase hkm4 and the FAD-dependent phenol hydroxylase hkm7 may catalyze consecutive hydroxylations to install 2 more hydroxy groups, and the methyltransferase hkm8 probably catalyzes two methylations using 2 molecules of S-adenosyl-L-methionine (SAM). The NRPS hkm11 activates and transfers trans-cinnamate supplied by the PAL hkm12 to hancockiamide D and produces hancockiamide A. NRPS Hkm11 has the flexibility to tolerate the bulky hancockiamide G as a substrate and the absence of the acetyl-transferase hkm3 opens up the opportunity for hkm11 to introduce a second N-cinnamoyl moiety. The cytochrome P450 monooxygenase hkm5 catalyzes the methylenedioxy bridge formation, converting hancockiamide A into hancockiamide G. Hkm5 can also convert hancockiamide B into hancockiamide C, and hancockiamide D into hancockiamide H. The N-acetyltransferase hkm3 finally transfers an acetyl group to 1-N of piperazine, converting hancockiamide A into hancockiamide B and hancockiamide G into hancockiamide C. This Aspergillus hancockii protein is NmrA-like family domain-containing oxidoreductase hkm9.